The chain runs to 178 residues: Ribonuclease M5 (178 aa).

The Toprim domain occupies Asn4–Ile100. Residues Glu10, Asp56, and Asp58 each contribute to the Mg(2+) site.

Belongs to the ribonuclease M5 family. Mg(2+) serves as cofactor.

It is found in the cytoplasm. It carries out the reaction Endonucleolytic cleavage of RNA, removing 21 and 42 nucleotides, respectively, from the 5'- and 3'-termini of a 5S-rRNA precursor.. Its function is as follows. Required for correct processing of both the 5' and 3' ends of 5S rRNA precursor. Cleaves both sides of a double-stranded region yielding mature 5S rRNA in one step. This chain is Ribonuclease M5, found in Staphylococcus aureus (strain NCTC 8325 / PS 47).